The chain runs to 632 residues: tRNA uridine 5-carboxymethylaminomethyl modification enzyme MnmG (632 aa).

FAD-binding positions include 15–20 (GAGHAG), isoleucine 127, and serine 182. An NAD(+)-binding site is contributed by 276–290 (GPRYCPSIEDKIVRF). Glutamine 373 is an FAD binding site.

Belongs to the MnmG family. As to quaternary structure, homodimer. Heterotetramer of two MnmE and two MnmG subunits. Requires FAD as cofactor.

Its subcellular location is the cytoplasm. NAD-binding protein involved in the addition of a carboxymethylaminomethyl (cmnm) group at the wobble position (U34) of certain tRNAs, forming tRNA-cmnm(5)s(2)U34. In Streptococcus pyogenes serotype M3 (strain SSI-1), this protein is tRNA uridine 5-carboxymethylaminomethyl modification enzyme MnmG.